Reading from the N-terminus, the 708-residue chain is Protein MICRORCHIDIA 5 (708 aa).

Residues 1 to 11 (MAESGSTNPKS) show a composition bias toward polar residues. The disordered stretch occupies residues 1–47 (MAESGSTNPKSPSVVPDSTLGGLKRDLRNYHDGDDSNNLSIKKSKTT). Residues 23 to 34 (LKRDLRNYHDGD) show a composition bias toward basic and acidic residues. The stretch at 590–665 (SVNLEAELQK…LENRQEGVST (76 aa)) forms a coiled coil. Positions 672–679 (ARRDVTED) match the Nuclear localization signal motif.

It belongs to the MORC ATPase protein family. In terms of assembly, homodimer and heterodimer. Component of an RNA-directed DNA methylation (RdDM) complex. It depends on Mg(2+) as a cofactor. The cofactor is Mn(2+).

It is found in the nucleus. Its function is as follows. Exhibits ATPase activity. Binds DNA/RNA in a non-specific manner and exhibits endonuclease activity. Probably involved in DNA repair. Involved in RNA-directed DNA methylation (RdDM) as a component of the RdDM machinery and required for gene silencing. May also be involved in the regulation of chromatin architecture to maintain gene silencing. This is Protein MICRORCHIDIA 5 from Arabidopsis thaliana (Mouse-ear cress).